Consider the following 201-residue polypeptide: Superoxide dismutase [Mn] (201 aa).

Mn(2+)-binding residues include histidine 27, histidine 81, aspartate 163, and histidine 167.

Belongs to the iron/manganese superoxide dismutase family. In terms of assembly, homodimer. Requires Mn(2+) as cofactor.

The protein localises to the secreted. It catalyses the reaction 2 superoxide + 2 H(+) = H2O2 + O2. Functionally, destroys superoxide anion radicals which are normally produced within the cells and which are toxic to biological systems. The polypeptide is Superoxide dismutase [Mn] (sodA) (Streptococcus pyogenes serotype M3 (strain ATCC BAA-595 / MGAS315)).